The sequence spans 818 residues: uncharacterized protein (818 aa).

Low complexity-rich tracts occupy residues 1–33 (MYNN…NYIS), 44–68 (NNFL…PQQQ), and 97–150 (NNSN…TKSN). Disordered regions lie at residues 1-68 (MYNN…PQQQ), 92-150 (LNTG…TKSN), 164-220 (KLDN…KYHE), 284-306 (NMNG…NNSD), and 415-445 (NINK…NNNN). 2 stretches are compositionally biased toward acidic residues: residues 172-190 (SEEE…EEKE) and 205-214 (DNNSQDEDKE). Positions 284 to 302 (NMNGSSDSSDSSNSSGHSR) are enriched in low complexity. Residues 534-554 (IIAIIVIVWPLIANLTYKFIV) traverse the membrane as a helical segment. The disordered stretch occupies residues 779–808 (ANNFMSDSNRSPSSSSSSSSSTSDSENGML). A compositionally biased stretch (low complexity) spans 784 to 803 (SDSNRSPSSSSSSSSSTSDS).

It is found in the membrane. This is an uncharacterized protein from Dictyostelium discoideum (Social amoeba).